The following is a 547-amino-acid chain: Natural resistance-associated macrophage protein 1 (547 aa).

A disordered region spans residues 1–30 (MTGDKDPQSVSRPNYGSISHPPSSEPQQEP). The Cytoplasmic segment spans residues 1-54 (MTGDKDPQSVSRPNYGSISHPPSSEPQQEPLRTTYLSEKIPIPDTEPGTFSLRK). The segment covering 8–17 (QSVSRPNYGS) has biased composition (polar residues). Residues 21–30 (PPSSEPQQEP) show a composition bias toward low complexity. The chain crosses the membrane as a helical span at residues 55–75 (LWAFTGPGFLMSIAFLDPGNI). Residues 76–81 (ESDLQA) are Extracellular-facing. The helical transmembrane segment at 82-102 (GAVAGFKLLWVLLWATVLGLL) threads the bilayer. The Cytoplasmic segment spans residues 103-139 (CQRLAARLGVVTGKDLGEICHLYYPKVPRTLLWLTIE). Residues 140–160 (LAIVGSDMQEVIGTAIAFSLL) form a helical membrane-spanning segment. At 161–164 (SAGR) the chain is on the extracellular side. Residues 165–185 (IPLWGGVLITIVDTFFFLFLD) traverse the membrane as a helical segment. The Cytoplasmic segment spans residues 186–193 (NYGLRKLE). Residues 194 to 214 (AFFGILITIMALTFGYEYVVA) traverse the membrane as a helical segment. Over 215-240 (RPAQVALLQGLLLPSCPGCGRPELLQ) the chain is Extracellular. A helical membrane pass occupies residues 241–261 (AVGIVGAIIMPHNIYLHSALV). The Cytoplasmic segment spans residues 262-286 (KSREIDRSRRPDIREANMYFLIEAS). Residues 287-307 (IALSVSFFINLFVVAVFGQAF) traverse the membrane as a helical segment. The Extracellular segment spans residues 308–346 (YQQTNEAAFNVCANSSLHDYAKIFPRNNLTVEVDIYQGG). 2 N-linked (GlcNAc...) asparagine glycosylation sites follow: asparagine 321 and asparagine 335. The helical transmembrane segment at 347–367 (VMLGCVFGPAALYIWAVGLLA) threads the bilayer. The Cytoplasmic segment spans residues 368–394 (AGQSSTMTGTYAGQFVMEGFLRLRWSR). The chain crosses the membrane as a helical span at residues 395–415 (FARVLLTRSCAILPTVLVVVF). At 416–432 (RDLKDLSGLNDLLNVLQ) the chain is on the extracellular side. A helical transmembrane segment spans residues 433 to 453 (SLLLPFAVLPILTFTSMPALM). Residues 454–464 (QEFANGRLSKA) are Cytoplasmic-facing. The chain crosses the membrane as a helical span at residues 465–485 (ITSFIMALVCAINLYFVVIYL). The Extracellular portion of the chain corresponds to 486 to 492 (PSLPHPA). A helical transmembrane segment spans residues 493–513 (YFILVALLAIVYLGLTTYLVW). Topologically, residues 514-547 (TCFIAHGVTLLAHSSHQHFLYGLPDVEEKGKISG) are cytoplasmic.

Belongs to the NRAMP family.

The protein localises to the late endosome membrane. It is found in the lysosome membrane. The enzyme catalyses Zn(2+)(in) + H(+)(out) = Zn(2+)(out) + H(+)(in). It carries out the reaction Fe(2+)(in) + H(+)(out) = Fe(2+)(out) + H(+)(in). The catalysed reaction is Mn(2+)(in) + H(+)(out) = Mn(2+)(out) + H(+)(in). Its function is as follows. Macrophage-specific antiporter that fluxes metal ions in either direction against a proton gradient. Localized to late endosomal lysosomal membranes, delivers bivalent cations from the cytosol into these acidic compartments where they may directly affect antimicrobial activity. Involved in iron metabolism and host natural resistance to infection with intracellular parasites. Pathogen resistance involves sequestration of Fe(2+) and Mn(2+), cofactors of both prokaryotic and eukaryotic catalases and superoxide dismutases, not only to protect the macrophage against its own generation of reactive oxygen species, but to deny the cations to the pathogen for synthesis of its protective enzymes. This is Natural resistance-associated macrophage protein 1 (SLC11A1) from Canis lupus familiaris (Dog).